A 293-amino-acid chain; its full sequence is MFRILLFLATNIAVVLVASVTLRLLGVEPYLQGSGLNLTSLLIFCAVFGMSGAMISLFLSKWIAKMSTRTQVIEQPRDAVESWLLDTVRELSSEAGIKMPEVGIFPAHQSNAFATGWNKNDALVAVSEGLLRRFSKDEIRAVLAHEIGHVANGDMVTLALIQGVINTFVMFFARIIGNIVDKAVFKNENGHGIGFFITTIFAEIVLGILASIIVMWFSRKREFRADAMGAKLAGSGAMIAALQRLKAETQMPNEMPDTLTAFGITEGVKQGFKALFSSHPPLDERIAALAANR.

Helical transmembrane passes span 2–22 (FRILLFLATNIAVVLVASVTL) and 38–58 (LTSLLIFCAVFGMSGAMISLF). Zn(2+) is bound at residue H145. E146 is an active-site residue. H149 contacts Zn(2+). The next 2 helical transmembrane spans lie at 156–176 (VTLALIQGVINTFVMFFARII) and 193–213 (IGFFITTIFAEIVLGILASII). A Zn(2+)-binding site is contributed by E222.

Belongs to the peptidase M48B family. Zn(2+) is required as a cofactor.

The protein resides in the cell inner membrane. The sequence is that of Protease HtpX from Hahella chejuensis (strain KCTC 2396).